A 240-amino-acid chain; its full sequence is NAD(P)H-hydrate epimerase (240 aa).

Residues 15 to 224 (AQEIDAELMG…SYNLKLPCYP (210 aa)) enclose the YjeF N-terminal domain. A (6S)-NADPHX-binding site is contributed by 66-70 (NQGGD). Glutamine 67 and aspartate 129 together coordinate K(+). (6S)-NADPHX-binding positions include 133–139 (GFSFHSE) and aspartate 162. Serine 165 is a binding site for K(+).

The protein belongs to the NnrE/AIBP family. Requires K(+) as cofactor.

The protein localises to the cytoplasm. It localises to the mitochondrion. The enzyme catalyses (6R)-NADHX = (6S)-NADHX. It carries out the reaction (6R)-NADPHX = (6S)-NADPHX. In terms of biological role, catalyzes the epimerization of the S- and R-forms of NAD(P)HX, a damaged form of NAD(P)H that is a result of enzymatic or heat-dependent hydration. This is a prerequisite for the S-specific NAD(P)H-hydrate dehydratase to allow the repair of both epimers of NAD(P)HX. The polypeptide is NAD(P)H-hydrate epimerase (Puccinia graminis f. sp. tritici (strain CRL 75-36-700-3 / race SCCL) (Black stem rust fungus)).